The primary structure comprises 222 residues: Coiled-coil domain-containing protein 70 (222 aa).

Positions 129–153 (NALWERDRNLLQEDKALWEEEKALW) form a coiled coil.

The polypeptide is Coiled-coil domain-containing protein 70 (Homo sapiens (Human)).